The chain runs to 521 residues: Ankyrin repeat domain-containing protein 34B (521 aa).

ANK repeat units follow at residues 9–38, 42–79, 83–113, and 117–146; these read TESNSLIKAVYQSRLRLTRLLLEGGAYINE, RGETPLMIACKTKHVDHQSVSKVKMIKYLLENNADPNI, FGKTALMHACLENAGAEVVSLLLESGADPSL, and TGFSALVYAVNSEDKETLRILLNACKAKGK. The disordered stretch occupies residues 161–188; that stretch reads QTTRQYLNVPPSPGIEGNNSPSPCTSPS. A compositionally biased stretch (polar residues) spans 177-188; it reads GNNSPSPCTSPS.

This sequence belongs to the ANKRD34 family.

It is found in the cytoplasm. Its subcellular location is the nucleus. The chain is Ankyrin repeat domain-containing protein 34B (ankrd34b) from Xenopus laevis (African clawed frog).